The sequence spans 208 residues: mRNA 3'-end-processing protein YTH1 (208 aa).

C3H1-type zinc fingers lie at residues 28–59, 61–88, 89–117, 118–145, and 147–170; these read DPDR…HVLP, FQNK…HEYN, LRKM…HIDP, ASKI…HIKK, and FCQR…HPQF.

This sequence belongs to the CPSF4/YTH1 family. As to quaternary structure, component of the cleavage and polyadenylation factor (CPF) complex, which is composed of at least PTI1, SYC1, SSU72, GLC7, MPE1, REF2, PFS2, PTA1, YSH1/BRR5, SWD2, CFT2/YDH1, YTH1, CFT1/YHH1, FIP1 and PAP1. Interacts with FIP1 and YSH1.

The protein resides in the nucleus. Its function is as follows. RNA-binding component of the cleavage and polyadenylation factor (CPF) complex, which plays a key role in polyadenylation-dependent pre-mRNA 3'-end formation and cooperates with cleavage factors including the CFIA complex and NAB4/CFIB. This chain is mRNA 3'-end-processing protein YTH1 (YTH1), found in Saccharomyces cerevisiae (strain ATCC 204508 / S288c) (Baker's yeast).